The primary structure comprises 63 residues: Large ribosomal subunit protein bL28 (63 aa).

Belongs to the bacterial ribosomal protein bL28 family.

The chain is Large ribosomal subunit protein bL28 from Geobacter sulfurreducens (strain ATCC 51573 / DSM 12127 / PCA).